A 128-amino-acid chain; its full sequence is Histone H2A type 1-H (128 aa).

Residues 1–22 (MSGRGKQGGKARAKAKTRSSRA) are disordered. N-acetylserine is present on serine 2. Phosphoserine; by RPS6KA5 is present on serine 2. Position 4 is a citrulline; alternate (arginine 4). Symmetric dimethylarginine; by PRMT5; alternate is present on arginine 4. An N6-(2-hydroxyisobutyryl)lysine modification is found at lysine 6. The segment covering 7-19 (QGGKARAKAKTRS) has biased composition (basic residues). Residue lysine 10 is modified to N6-(2-hydroxyisobutyryl)lysine; alternate. N6-(beta-hydroxybutyryl)lysine; alternate is present on residues lysine 10 and lysine 14. The residue at position 10 (lysine 10) is an N6-lactoyllysine; alternate. Lysine 10 carries the N6-succinyllysine; alternate modification. Lysine 14 participates in a covalent cross-link: Glycyl lysine isopeptide (Lys-Gly) (interchain with G-Cter in ubiquitin); alternate. Residue lysine 16 forms a Glycyl lysine isopeptide (Lys-Gly) (interchain with G-Cter in ubiquitin) linkage. Position 37 is an N6-(2-hydroxyisobutyryl)lysine; alternate (lysine 37). Residue lysine 37 is modified to N6-(beta-hydroxybutyryl)lysine; alternate. N6-crotonyllysine; alternate is present on lysine 37. Lysine 75 and lysine 76 each carry N6-(2-hydroxyisobutyryl)lysine. Lysine 96 carries the N6-(2-hydroxyisobutyryl)lysine; alternate modification. Lysine 96 is subject to N6-(beta-hydroxybutyryl)lysine; alternate. Lysine 96 is modified (N6-succinyllysine; alternate). Position 96 is an N6-glutaryllysine; alternate (lysine 96). Lysine 100 is modified (N6-glutaryllysine). At glutamine 105 the chain carries N5-methylglutamine. The residue at position 119 (lysine 119) is an N6-(2-hydroxyisobutyryl)lysine; alternate. Lysine 119 bears the N6-(beta-hydroxybutyryl)lysine; alternate mark. Residues lysine 119 and lysine 120 each carry the N6-crotonyllysine; alternate modification. An N6-glutaryllysine; alternate mark is found at lysine 119 and lysine 120. A Glycyl lysine isopeptide (Lys-Gly) (interchain with G-Cter in ubiquitin); alternate cross-link involves residue lysine 120. Threonine 121 bears the Phosphothreonine; by DCAF1 mark. The residue at position 126 (lysine 126) is an N6-crotonyllysine; alternate. Lysine 126 is subject to N6-glutaryllysine; alternate.

Belongs to the histone H2A family. In terms of assembly, the nucleosome is a histone octamer containing two molecules each of H2A, H2B, H3 and H4 assembled in one H3-H4 heterotetramer and two H2A-H2B heterodimers. The octamer wraps approximately 147 bp of DNA. In terms of processing, deiminated on Arg-4 in granulocytes upon calcium entry. Monoubiquitination of Lys-120 (H2AK119Ub) by RING1, TRIM37 and RNF2/RING2 complex gives a specific tag for epigenetic transcriptional repression and participates in X chromosome inactivation of female mammals. It is involved in the initiation of both imprinted and random X inactivation. Ubiquitinated H2A is enriched in inactive X chromosome chromatin. Ubiquitination of H2A functions downstream of methylation of 'Lys-27' of histone H3 (H3K27me). H2AK119Ub by RNF2/RING2 can also be induced by ultraviolet and may be involved in DNA repair. Monoubiquitination of Lys-120 (H2AK119Ub) by TRIM37 may promote transformation of cells in a number of breast cancers. Following DNA double-strand breaks (DSBs), it is ubiquitinated through 'Lys-63' linkage of ubiquitin moieties by the E2 ligase UBE2N and the E3 ligases RNF8 and RNF168, leading to the recruitment of repair proteins to sites of DNA damage. Ubiquitination at Lys-14 and Lys-16 (H2AK13Ub and H2AK15Ub, respectively) in response to DNA damage is initiated by RNF168 that mediates monoubiquitination at these 2 sites, and 'Lys-63'-linked ubiquitin are then conjugated to monoubiquitin; RNF8 is able to extend 'Lys-63'-linked ubiquitin chains in vitro. Deubiquitinated by USP51 at Lys-14 and Lys-16 (H2AK13Ub and H2AK15Ub, respectively) after damaged DNA is repaired. H2AK119Ub and ionizing radiation-induced 'Lys-63'-linked ubiquitination (H2AK13Ub and H2AK15Ub) are distinct events. Post-translationally, phosphorylation on Ser-2 (H2AS1ph) is enhanced during mitosis. Phosphorylation on Ser-2 by RPS6KA5/MSK1 directly represses transcription. Acetylation of H3 inhibits Ser-2 phosphorylation by RPS6KA5/MSK1. Phosphorylation at Thr-121 (H2AT120ph) by DCAF1 is present in the regulatory region of many tumor suppresor genes and down-regulates their transcription. In terms of processing, glutamine methylation at Gln-105 (H2AQ104me) by FBL is specifically dedicated to polymerase I. It is present at 35S ribosomal DNA locus and impairs binding of the FACT complex. Symmetric dimethylation on Arg-4 by the PRDM1/PRMT5 complex may play a crucial role in the germ-cell lineage. Post-translationally, crotonylation (Kcr) is specifically present in male germ cells and marks testis-specific genes in post-meiotic cells, including X-linked genes that escape sex chromosome inactivation in haploid cells. Crotonylation marks active promoters and enhancers and confers resistance to transcriptional repressors. It is also associated with post-meiotically activated genes on autosomes. In terms of processing, lactylated in macrophages by EP300/P300 by using lactoyl-CoA directly derived from endogenous or exogenous lactate, leading to stimulates gene transcription.

The protein localises to the nucleus. The protein resides in the chromosome. In terms of biological role, core component of nucleosome. Nucleosomes wrap and compact DNA into chromatin, limiting DNA accessibility to the cellular machineries which require DNA as a template. Histones thereby play a central role in transcription regulation, DNA repair, DNA replication and chromosomal stability. DNA accessibility is regulated via a complex set of post-translational modifications of histones, also called histone code, and nucleosome remodeling. The polypeptide is Histone H2A type 1-H (Homo sapiens (Human)).